The primary structure comprises 466 residues: MRSTKIVCTVGPRTDSYEMIEKMIDLGVNVFRINTSHGDWNEQEQKILKIKDLREKKKKPVAILIDLAGPKIRTGYLEKEFVELKEGQIFTLTTKEILGNEHIVSVNLSSLPKDVKKGDTILLSDGEIVLEVIETTDTEVKTVVKVGGKITHRRGVNVPTADLSVESITDRDREFIKLGTLHDVEFFALSFVRKPEDVLKAKEEIRKHGKEIPVISKIETKKALERLEEIIKVSDGIMVARGDLGVEIPIEEVPIVQKEIIKLSKYYSKPVIVATQILESMIENPFPTRAEVTDIANAIFDGADALLLTAETAVGKHPLEAIKVLSKVAKEAEKKLEFFRTIEYDTSDISEAISHACWQLSESLNAKLIITPTISGSTAVRVSKYNVSQPIVALTPEEKTYYRLSLVRKVIPVLAEKCSQELEFIEKGLKKVEEMGLAEKGDLVVLTSGVPGKVGTTNTIRVLKVD.

A substrate-binding site is contributed by Arg-32. Residues Asn-34, Ser-36, and Asp-66 each contribute to the K(+) site. ATP is bound at residue Asn-34–His-37. Arg-73 lines the ATP pocket. Glu-219 serves as a coordination point for Mg(2+). Substrate is bound by residues Gly-242, Asp-243, and Thr-275. Residue Asp-243 participates in Mg(2+) binding.

Belongs to the pyruvate kinase family. In terms of assembly, homotetramer. The cofactor is a divalent metal cation.

It catalyses the reaction pyruvate + ATP = phosphoenolpyruvate + ADP + H(+). The protein operates within carbohydrate degradation; glycolysis; pyruvate from D-glyceraldehyde 3-phosphate: step 5/5. With respect to regulation, allosterically activated by AMP and inhibited by ATP. This chain is Pyruvate kinase (pyk), found in Thermotoga maritima (strain ATCC 43589 / DSM 3109 / JCM 10099 / NBRC 100826 / MSB8).